We begin with the raw amino-acid sequence, 182 residues long: ATP synthase subunit b, chloroplastic (182 aa).

Residues 33 to 51 (VLNIAILLSGVIYLGRNFL) form a helical membrane-spanning segment.

This sequence belongs to the ATPase B chain family. In terms of assembly, F-type ATPases have 2 components, F(1) - the catalytic core - and F(0) - the membrane proton channel. F(1) has five subunits: alpha(3), beta(3), gamma(1), delta(1), epsilon(1). F(0) has four main subunits: a(1), b(1), b'(1) and c(10-14). The alpha and beta chains form an alternating ring which encloses part of the gamma chain. F(1) is attached to F(0) by a central stalk formed by the gamma and epsilon chains, while a peripheral stalk is formed by the delta, b and b' chains.

It is found in the plastid. It localises to the chloroplast thylakoid membrane. Functionally, f(1)F(0) ATP synthase produces ATP from ADP in the presence of a proton or sodium gradient. F-type ATPases consist of two structural domains, F(1) containing the extramembraneous catalytic core and F(0) containing the membrane proton channel, linked together by a central stalk and a peripheral stalk. During catalysis, ATP synthesis in the catalytic domain of F(1) is coupled via a rotary mechanism of the central stalk subunits to proton translocation. In terms of biological role, component of the F(0) channel, it forms part of the peripheral stalk, linking F(1) to F(0). The protein is ATP synthase subunit b, chloroplastic of Guillardia theta (Cryptophyte).